The sequence spans 254 residues: Inner membrane protein YabI (254 aa).

The Periplasmic segment spans residues 1–7 (MQALLEH). Transmembrane regions (helical) follow at residues 8 to 28 (FITQSTVYSLMAVVLVAFLES) and 29 to 49 (LALVGLILPGTVLMAGLGALI). The Periplasmic portion of the chain corresponds to 50-58 (GSGELSFWH). A helical transmembrane segment spans residues 59–79 (AWLAGIIGCLMGDWISFWLGW). Residues 80–144 (RFKKPLHRWS…LPVAKFITPN (65 aa)) are Cytoplasmic-facing. The chain crosses the membrane as a helical span at residues 145–165 (IIGCLLWPPFYFLPGILAGAA). Over 166 to 178 (IDIPAGMQSGEFK) the chain is Periplasmic. Residues 179–199 (WLLLATAVFLWVGGWLCWRLW) traverse the membrane as a helical segment. Topologically, residues 200 to 215 (RSGKATDRLSHYLSRG) are cytoplasmic. The chain crosses the membrane as a helical span at residues 216-236 (RLLWLTPLISAIGVVALVVLI). Topologically, residues 237-254 (RHPLMPVYIDILRKVVGV) are periplasmic.

This sequence belongs to the DedA family.

The protein resides in the cell inner membrane. The sequence is that of Inner membrane protein YabI (yabI) from Escherichia coli (strain K12).